Reading from the N-terminus, the 269-residue chain is Aegyptin-like protein (269 aa).

A signal peptide spans 1-19 (MKLLLLLASVLCLALIVSA). Residues 19-152 (ARPSDETTDQ…GGAEGGEESP (134 aa)) form a disordered region. The segment at 38–148 (TSDSYHQEED…AGEEGGAEGG (111 aa)) is GE-rich region which mediates binding of Ca(2+). Composition is skewed to acidic residues over residues 56–73 (GTEDGNSEDDSSELESSS), 98–121 (GEEDEAGEEGEAGEEGEAGEEGGA), and 131–149 (GGADEEGSAGEEGGAEGGE). A mediates binding of host collagen and inhibition of platelet aggregation region spans residues 148–269 (GEESPVNTYH…DCIVEKRDSE (122 aa)). 2 disulfides stabilise this stretch: Cys-208–Cys-261 and Cys-230–Cys-239.

This sequence belongs to the aegyptin family. As to expression, female saliva (at protein level). Distal lateral lobes of female salivary gland (at protein level). Low-level expression in male salivary gland. Not detected in female and male carcasses.

Its subcellular location is the secreted. Its function is as follows. Modulates blood feeding of female mosquitoes on vertebrate hosts. Inhibits collagen-induced platelet aggregation in the host via preventing collagen interaction with its ligands: glycoprotein VI and integrin alpha-2/beta-1 (ITGA2/ITGB1). Inhibits collagen-induced increase of Ca(2+) levels in host platelets. Binds to host collagens. Binds Ca(2+). Prevents a decrease in platelet count in the host blood after collagen injection. In terms of biological role, (Microbial infection) Does not affect the development of Plasmodium berghei parasites in mosquitoes. This Anopheles stephensi (Indo-Pakistan malaria mosquito) protein is Aegyptin-like protein.